The primary structure comprises 206 residues: Ras-related protein Rab-7a (206 aa).

15–22 (GDSGVGKT) lines the GTP pocket. Residues S17 and S23 each carry the phosphoserine modification. A phosphothreonine mark is found at T34, T40, and T64. GTP is bound by residues 34–40 (TQQYRAT) and 63–67 (DTAGQ). An Effector region motif is present at residues 37 to 45 (YRATVGADF). The residue at position 72 (S72) is a Phosphoserine. Y78 and Y88 each carry phosphotyrosine. Residues 125–128 (NKLD) and 157–158 (AK) each bind GTP. Residues C205 and C206 are each lipidated (S-geranylgeranyl cysteine).

It belongs to the small GTPase superfamily. Rab family.

The protein resides in the cytoplasmic vesicle. It is found in the phagosome membrane. Its subcellular location is the late endosome membrane. The protein localises to the lysosome membrane. It localises to the autophagosome membrane. The protein resides in the lipid droplet. It catalyses the reaction GTP + H2O = GDP + phosphate + H(+). Its function is as follows. Small GTPase which cycles between active GTP-bound and inactive GDP-bound states. In its active state, binds to a variety of effector proteins playing a key role in the regulation of endo-lysosomal trafficking. Governs early-to-late endosomal maturation, microtubule minus-end as well as plus-end directed endosomal migration and positioning, and endosome-lysosome transport through different protein-protein interaction cascades. Involved in lipophagy, a cytosolic lipase-independent autophagic pathway. Plays a role in phagocyte formation and acidification. This chain is Ras-related protein Rab-7a, found in Paramecium octaurelia.